Reading from the N-terminus, the 218-residue chain is Thiamine-phosphate synthase (218 aa).

Residues 43 to 47 (QLRDK) and Asn75 each bind 4-amino-2-methyl-5-(diphosphooxymethyl)pyrimidine. Mg(2+)-binding residues include Asp76 and Asp95. Ser114 provides a ligand contact to 4-amino-2-methyl-5-(diphosphooxymethyl)pyrimidine. 141-143 (TPT) provides a ligand contact to 2-[(2R,5Z)-2-carboxy-4-methylthiazol-5(2H)-ylidene]ethyl phosphate. Lys144 contributes to the 4-amino-2-methyl-5-(diphosphooxymethyl)pyrimidine binding site. Gly172 contacts 2-[(2R,5Z)-2-carboxy-4-methylthiazol-5(2H)-ylidene]ethyl phosphate.

It belongs to the thiamine-phosphate synthase family. Mg(2+) serves as cofactor.

The enzyme catalyses 2-[(2R,5Z)-2-carboxy-4-methylthiazol-5(2H)-ylidene]ethyl phosphate + 4-amino-2-methyl-5-(diphosphooxymethyl)pyrimidine + 2 H(+) = thiamine phosphate + CO2 + diphosphate. It catalyses the reaction 2-(2-carboxy-4-methylthiazol-5-yl)ethyl phosphate + 4-amino-2-methyl-5-(diphosphooxymethyl)pyrimidine + 2 H(+) = thiamine phosphate + CO2 + diphosphate. It carries out the reaction 4-methyl-5-(2-phosphooxyethyl)-thiazole + 4-amino-2-methyl-5-(diphosphooxymethyl)pyrimidine + H(+) = thiamine phosphate + diphosphate. It participates in cofactor biosynthesis; thiamine diphosphate biosynthesis; thiamine phosphate from 4-amino-2-methyl-5-diphosphomethylpyrimidine and 4-methyl-5-(2-phosphoethyl)-thiazole: step 1/1. Functionally, condenses 4-methyl-5-(beta-hydroxyethyl)thiazole monophosphate (THZ-P) and 2-methyl-4-amino-5-hydroxymethyl pyrimidine pyrophosphate (HMP-PP) to form thiamine monophosphate (TMP). In Thermobifida fusca (strain YX), this protein is Thiamine-phosphate synthase.